Consider the following 150-residue polypeptide: Large ribosomal subunit protein bL9 (150 aa).

It belongs to the bacterial ribosomal protein bL9 family.

Its function is as follows. Binds to the 23S rRNA. The chain is Large ribosomal subunit protein bL9 from Pediococcus pentosaceus (strain ATCC 25745 / CCUG 21536 / LMG 10740 / 183-1w).